Reading from the N-terminus, the 297-residue chain is Lipoyl synthase (297 aa).

Residues Cys-37, Cys-42, Cys-48, Cys-63, Cys-67, Cys-70, and Ser-276 each contribute to the [4Fe-4S] cluster site. Residues 49–265 (WSRKHATVMI…ERIAKTKGFL (217 aa)) enclose the Radical SAM core domain.

Belongs to the radical SAM superfamily. Lipoyl synthase family. It depends on [4Fe-4S] cluster as a cofactor.

The protein localises to the cytoplasm. The catalysed reaction is [[Fe-S] cluster scaffold protein carrying a second [4Fe-4S](2+) cluster] + N(6)-octanoyl-L-lysyl-[protein] + 2 oxidized [2Fe-2S]-[ferredoxin] + 2 S-adenosyl-L-methionine + 4 H(+) = [[Fe-S] cluster scaffold protein] + N(6)-[(R)-dihydrolipoyl]-L-lysyl-[protein] + 4 Fe(3+) + 2 hydrogen sulfide + 2 5'-deoxyadenosine + 2 L-methionine + 2 reduced [2Fe-2S]-[ferredoxin]. Its pathway is protein modification; protein lipoylation via endogenous pathway; protein N(6)-(lipoyl)lysine from octanoyl-[acyl-carrier-protein]: step 2/2. In terms of biological role, catalyzes the radical-mediated insertion of two sulfur atoms into the C-6 and C-8 positions of the octanoyl moiety bound to the lipoyl domains of lipoate-dependent enzymes, thereby converting the octanoylated domains into lipoylated derivatives. This is Lipoyl synthase from Rickettsia prowazekii (strain Madrid E).